Here is a 1048-residue protein sequence, read N- to C-terminus: 3-hydroxy-3-methylglutaryl-coenzyme A reductase (1048 aa).

Topologically, residues 1 to 32 (MDPVVRKPDPGGVQHRVTKALRAIVGHACRHP) are cytoplasmic. A helical transmembrane segment spans residues 33 to 53 (IHTLLVTALTAATTHLHVLEG). The Lumenal segment spans residues 54-220 (TYQATHRGLA…FLHRVHHAET (167 aa)). The chain crosses the membrane as a helical span at residues 221–241 (VDLVIIGLSYLAMNMTVVSLF). Residues 222–403 (DLVIIGLSYL…FTFYATILCV (182 aa)) enclose the SSD domain. Residues 242–250 (RVMRHLGSR) lie on the Cytoplasmic side of the membrane. Residues 251–271 (FWLAASVLLSGAFAFVLGLGI) traverse the membrane as a helical segment. The Lumenal segment spans residues 272–276 (TTTCD). Residues 277 to 297 (VPVDMLLLFEGIPYLVLTVGF) traverse the membrane as a helical segment. Residues 298 to 348 (EKPIQLTRAVLCVSEELWGGGQRQVPNGASSDDSRQNQLIPNIIQLAVDRE) lie on the Cytoplasmic side of the membrane. Residues 349–369 (GWYIVRSYLLEIGALALGAVL) traverse the membrane as a helical segment. Residues 370–377 (RPKDSLGH) are Lumenal-facing. The chain crosses the membrane as a helical span at residues 378–398 (FCFLAAWTLLIDAVLLFTFYA). The Cytoplasmic portion of the chain corresponds to 399 to 439 (TILCVKLEITRIRSPGGLGQVNAKHPSGIFGHKVKSTNITW). Residues 440-460 (WKLLTVGGFVLCHFLQLSPFF) form a helical membrane-spanning segment. The Lumenal portion of the chain corresponds to 461–542 (YRVMGEYMAN…LDGLESPLGR (82 aa)). Residues asparagine 470 and asparagine 520 are each glycosylated (N-linked (GlcNAc...) asparagine). Residues 543–563 (LCLMGALVVSLVLNNHLIHAA) traverse the membrane as a helical segment. The Cytoplasmic portion of the chain corresponds to 564-1048 (RWHAWPQARE…NRSAGATVKK (485 aa)). Glutamate 729 functions as the Charge relay system in the catalytic mechanism. CoA is bound at residue 735 to 741 (SASRGCK). NADP(+)-binding positions include 796–798 (SRF) and 823–831 (DAMGMNMIS). Lysine 863 (charge relay system) is an active-site residue. A CoA-binding site is contributed by 892-894 (VLK). Catalysis depends on aspartate 939, which acts as the Charge relay system. 1034–1035 (AH) contributes to the CoA binding site. Residue histidine 1035 is the Proton donor of the active site. 1039–1040 (NR) is a binding site for NADP(+).

This sequence belongs to the HMG-CoA reductase family.

The protein resides in the endoplasmic reticulum membrane. The enzyme catalyses (R)-mevalonate + 2 NADP(+) + CoA = (3S)-3-hydroxy-3-methylglutaryl-CoA + 2 NADPH + 2 H(+). Its pathway is metabolic intermediate biosynthesis; (R)-mevalonate biosynthesis; (R)-mevalonate from acetyl-CoA: step 3/3. In terms of biological role, HMG-CoA reductase; part of the first module of ergosterol biosynthesis pathway that includes the early steps of the pathway, conserved across all eukaryotes, and which results in the formation of mevalonate from acetyl-coenzyme A (acetyl-CoA). In this module, the cytosolic acetyl-CoA acetyltransferase catalyzes the formation of acetoacetyl-CoA. The hydroxymethylglutaryl-CoA synthase then condenses acetyl-CoA with acetoacetyl-CoA to form HMG-CoA. The rate-limiting step of the early module is the reduction to mevalonate by the 3-hydroxy-3-methylglutaryl-coenzyme A (HMG-CoA) reductase. This Aspergillus terreus protein is 3-hydroxy-3-methylglutaryl-coenzyme A reductase.